The chain runs to 175 residues: MSLDTAIFAGGCFWCMVQPFDTYPGIEKVESGYTGGHVANPTYEQVCSGTTGHTEAVKITFDPDKISYKDLVEIYWHQTDPTDASGQFQDRGDNYRPVIFVKNDEQRKIAEKSKKALQESGRFGDAKIVTTIEDVQPFYPAEDYHQGFYKKDPQRFALEEAGGRQQFIEKYWKNN.

Cys-12 is an active-site residue.

Belongs to the MsrA Met sulfoxide reductase family.

It carries out the reaction L-methionyl-[protein] + [thioredoxin]-disulfide + H2O = L-methionyl-(S)-S-oxide-[protein] + [thioredoxin]-dithiol. It catalyses the reaction [thioredoxin]-disulfide + L-methionine + H2O = L-methionine (S)-S-oxide + [thioredoxin]-dithiol. Its function is as follows. Has an important function as a repair enzyme for proteins that have been inactivated by oxidation. Catalyzes the reversible oxidation-reduction of methionine sulfoxide in proteins to methionine. This is Peptide methionine sulfoxide reductase MsrA from Limosilactobacillus reuteri (strain DSM 20016) (Lactobacillus reuteri).